Consider the following 353-residue polypeptide: Phosphoribosylformylglycinamidine cyclo-ligase (353 aa).

This sequence belongs to the AIR synthase family.

It is found in the cytoplasm. The enzyme catalyses 2-formamido-N(1)-(5-O-phospho-beta-D-ribosyl)acetamidine + ATP = 5-amino-1-(5-phospho-beta-D-ribosyl)imidazole + ADP + phosphate + H(+). The protein operates within purine metabolism; IMP biosynthesis via de novo pathway; 5-amino-1-(5-phospho-D-ribosyl)imidazole from N(2)-formyl-N(1)-(5-phospho-D-ribosyl)glycinamide: step 2/2. The chain is Phosphoribosylformylglycinamidine cyclo-ligase from Pseudomonas aeruginosa (strain LESB58).